The following is a 271-amino-acid chain: MPELPEVEVTRQGIAPHLVEQTVVDLIVRNASLRWPVPELAKQIIGQTIRQVRRRAKYLLIDTDAGTSIVHLGMSGSLRILPHDTPVEKHDHIDLVLANGRILRFNDPRRFGAWLWCQLPEEAHPLLEKLGPEPLTDAFNVNQLAAALAGKKKAIKLCLMDNHIVVGVGNIYANEALFAAGIHPEAEAGKIDIERLTVLVAEVKQILAHAIKQGGTTLKDFTNAEGKPGYFAQKLHVYGRGGETCTQCGNLLSEIRLGQRTTVFCGICQTR.

Pro-2 functions as the Schiff-base intermediate with DNA in the catalytic mechanism. Glu-3 (proton donor) is an active-site residue. Lys-57 serves as the catalytic Proton donor; for beta-elimination activity. Residues His-90, Arg-109, and Lys-151 each coordinate DNA. Residues 236 to 270 (HVYGRGGETCTQCGNLLSEIRLGQRTTVFCGICQT) form an FPG-type zinc finger. Arg-260 functions as the Proton donor; for delta-elimination activity in the catalytic mechanism.

It belongs to the FPG family. In terms of assembly, monomer. It depends on Zn(2+) as a cofactor.

It carries out the reaction Hydrolysis of DNA containing ring-opened 7-methylguanine residues, releasing 2,6-diamino-4-hydroxy-5-(N-methyl)formamidopyrimidine.. The enzyme catalyses 2'-deoxyribonucleotide-(2'-deoxyribose 5'-phosphate)-2'-deoxyribonucleotide-DNA = a 3'-end 2'-deoxyribonucleotide-(2,3-dehydro-2,3-deoxyribose 5'-phosphate)-DNA + a 5'-end 5'-phospho-2'-deoxyribonucleoside-DNA + H(+). Functionally, involved in base excision repair of DNA damaged by oxidation or by mutagenic agents. Acts as a DNA glycosylase that recognizes and removes damaged bases. Has a preference for oxidized purines, such as 7,8-dihydro-8-oxoguanine (8-oxoG). Has AP (apurinic/apyrimidinic) lyase activity and introduces nicks in the DNA strand. Cleaves the DNA backbone by beta-delta elimination to generate a single-strand break at the site of the removed base with both 3'- and 5'-phosphates. The polypeptide is Formamidopyrimidine-DNA glycosylase (Shewanella sp. (strain MR-7)).